We begin with the raw amino-acid sequence, 286 residues long: Mycolic acid methyltransferase MmaA1 (286 aa).

S-adenosyl-L-methionine is bound by residues 32–33, 71–73, 93–98, and 122–123; these read YT, GCG, TLSRNH, and WE. Cys268 is a catalytic residue.

It belongs to the CFA/CMAS family.

Its pathway is lipid metabolism; mycolic acid biosynthesis. In terms of biological role, involved in the conversion of a cis-olefin into a trans-olefin with concomitant introduction of an allylic methyl branch at the proximal position of the precursor to both the methoxy and ketomycolic acids. It directly affects the cis- to trans ratio and indirectly affects the keto to methoxy ratio. This chain is Mycolic acid methyltransferase MmaA1 (cmaD), found in Mycobacterium bovis (strain ATCC BAA-935 / AF2122/97).